Reading from the N-terminus, the 242-residue chain is Venom redulysin 2 (242 aa).

A signal peptide spans 1–19 (MSKIWILLLLVGAVQFARG). A propeptide spanning residues 20 to 46 (FPALEEEQEDDVIDWPSFEYDLSDEER) is cleaved from the precursor.

It belongs to the redulysin-like family. In terms of processing, contains 5 disulfide bonds. As to expression, expressed by the venom gland (posterior main gland) (at protein level).

The protein resides in the secreted. Functionally, highly abundant protein that may be responsible for the observed disruption of sensory neuron membranes, since it is homologous to proteins such as trialysin, which forms pores in lipid bilayers. Probable insecticidal toxin. This Platymeris rhadamanthus (Red spot assassin bug) protein is Venom redulysin 2.